The following is a 93-amino-acid chain: Small ribosomal subunit protein uS19 (93 aa).

The protein belongs to the universal ribosomal protein uS19 family.

Its function is as follows. Protein S19 forms a complex with S13 that binds strongly to the 16S ribosomal RNA. This Salinispora tropica (strain ATCC BAA-916 / DSM 44818 / JCM 13857 / NBRC 105044 / CNB-440) protein is Small ribosomal subunit protein uS19.